We begin with the raw amino-acid sequence, 54 residues long: Ovomucoid (54 aa).

The Kazal-like domain occupies Val-4–Cys-54. 3 disulfide bridges follow: Cys-6–Cys-36, Cys-14–Cys-33, and Cys-22–Cys-54. Asn-43 is a glycosylation site (N-linked (GlcNAc...) asparagine).

It localises to the secreted. The chain is Ovomucoid from Corvus albus (Pied crow).